Consider the following 311-residue polypeptide: Aspartate carbamoyltransferase catalytic subunit (311 aa).

Residues arginine 55 and threonine 56 each coordinate carbamoyl phosphate. Lysine 85 lines the L-aspartate pocket. Positions 106, 135, and 138 each coordinate carbamoyl phosphate. Positions 168 and 230 each coordinate L-aspartate. Carbamoyl phosphate-binding residues include leucine 268 and proline 269.

This sequence belongs to the aspartate/ornithine carbamoyltransferase superfamily. ATCase family. In terms of assembly, heterododecamer (2C3:3R2) of six catalytic PyrB chains organized as two trimers (C3), and six regulatory PyrI chains organized as three dimers (R2).

The catalysed reaction is carbamoyl phosphate + L-aspartate = N-carbamoyl-L-aspartate + phosphate + H(+). The protein operates within pyrimidine metabolism; UMP biosynthesis via de novo pathway; (S)-dihydroorotate from bicarbonate: step 2/3. In terms of biological role, catalyzes the condensation of carbamoyl phosphate and aspartate to form carbamoyl aspartate and inorganic phosphate, the committed step in the de novo pyrimidine nucleotide biosynthesis pathway. This chain is Aspartate carbamoyltransferase catalytic subunit, found in Klebsiella pneumoniae subsp. pneumoniae (strain ATCC 700721 / MGH 78578).